Consider the following 105-residue polypeptide: U-scoloptoxin(10)-Sm3a (105 aa).

The signal sequence occupies residues 1–23 (MYKFIFIFFTVFFLINIIEESXT).

Belongs to the scoloptoxin-10 family. Post-translationally, contains 3 disulfide bonds. In terms of tissue distribution, expressed by the venom gland.

The protein resides in the secreted. The polypeptide is U-scoloptoxin(10)-Sm3a (Scolopendra morsitans (Tanzanian blue ringleg centipede)).